Here is a 109-residue protein sequence, read N- to C-terminus: ATPase inhibitor mai-2, mitochondrial (109 aa).

Disordered stretches follow at residues Phe-18–Asp-39 and Glu-73–Glu-109. Positions Gly-21–Gly-35 are enriched in gly residues. The stretch at Tyr-55–Glu-109 forms a coiled coil.

Belongs to the ATPase inhibitor family.

Its subcellular location is the mitochondrion. Thought to be a regulatory component of the ATP-synthesizing complex in the mitochondria. Activity is pH dependent. The polypeptide is ATPase inhibitor mai-2, mitochondrial (mai-2) (Caenorhabditis elegans).